A 533-amino-acid polypeptide reads, in one-letter code: MCYSLSIQSSIDFHNRNALKIHGDRAILTSNLPTLRRIPFLPERDRRRKLVLCTGRVVNSLKFTGNTSVDLCGIPRHRLRVSCSDARRTPEETAAELTAQPNFSEFITSERVKVVAMLALALALCNADRVVMSVAIVPLSLSRGWSKSFSGIVQSSFLWGYLISPIAGGTLVDRYGGKVVMAWGVALWSLATFLTPWAADSSLWALLAARAMVGVAEGVALPCMNNMVARWFPPTERSRAVGIAMAGFQLGNVVGLMLSPILMSQGGIYGPFVIFGLSGFLWLLVWLSATSSAPDRHPQITKSELEYIKQKKQISTMENKRISTSGIPPFGRLLSKMPTWAVIVANSMHSWGFFVILSWMPIYFNSVYHVNLKQAAWFSAVPWSMMAFTGYIAGFWSDLLIRRGTSITLTRKIMQSIGFIGPGIALIGLTTAKQPLVASAWLSLAVGLKSFSHLGFLINLQEIAPEYSGVLHGMCLTAGTLAAIVGTVGAGFFVELLGSFQGFILLTAILYLLSALFYNIYATGERVDFDTTA.

12 helical membrane-spanning segments follow: residues M117–V137, I152–V172, V179–A199, L203–C223, I243–M263, G267–L287, V342–I362, A376–W396, I417–V437, A438–I458, M474–V494, and G502–A522.

This sequence belongs to the major facilitator superfamily. Sodium/anion cotransporter (TC 2.A.1.14) family. As to expression, expressed in leaf veins and root tips.

It is found in the plastid. It localises to the chloroplast membrane. In terms of biological role, inorganic phosphate and probable anion transporter. The chain is Probable anion transporter 4, chloroplastic (ANTR4) from Arabidopsis thaliana (Mouse-ear cress).